The primary structure comprises 235 residues: Superoxide dismutase [Mn] 3.1, mitochondrial (235 aa).

Residues 1-31 (MALRTLASKKVLSFPFGGAGRPLAAAASARG) constitute a mitochondrion transit peptide. Mn(2+) contacts are provided by His-59, His-107, Asp-196, and His-200.

Belongs to the iron/manganese superoxide dismutase family. Homotetramer. Requires Mn(2+) as cofactor.

The protein localises to the mitochondrion matrix. It carries out the reaction 2 superoxide + 2 H(+) = H2O2 + O2. In terms of biological role, destroys superoxide anion radicals which are normally produced within the cells and which are toxic to biological systems. The sequence is that of Superoxide dismutase [Mn] 3.1, mitochondrial (SODA.4) from Zea mays (Maize).